Here is a 293-residue protein sequence, read N- to C-terminus: Methylsterol monooxygenase 1 (293 aa).

2 consecutive transmembrane segments (helical) span residues 55 to 75 (LIVHEALYFLFCLPGFLFQFI) and 100 to 120 (VLLFNHFCIQLPLICGTYYFT). One can recognise a Fatty acid hydroxylase domain in the interval 145–274 (CAVIEDTWHY…FTWWDRIFGT (130 aa)). Residues 157–161 (HRLLH) carry the Histidine box-1 motif. Positions 170-174 (HKVHH) match the Histidine box-2 motif. A helical transmembrane segment spans residues 199–219 (FFIGIVLLCDHVILLWAWVTI). The Histidine box-3 signature appears at 249–255 (HHDFHHM).

Belongs to the sterol desaturase family. The cofactor is Fe cation. In terms of processing, ubiquitinated by MARCHF6, leading to proteasomal degradation.

The protein localises to the endoplasmic reticulum membrane. It carries out the reaction 4,4-dimethyl-5alpha-cholest-7-en-3beta-ol + 6 Fe(II)-[cytochrome b5] + 3 O2 + 5 H(+) = 4alpha-carboxy-4beta-methyl-5alpha-cholest-7-ene-3beta-ol + 6 Fe(III)-[cytochrome b5] + 4 H2O. The enzyme catalyses 4,4-dimethyl-5alpha-cholesta-8,24-dien-3beta-ol + 6 Fe(II)-[cytochrome b5] + 3 O2 + 5 H(+) = 4beta-methylzymosterol-4alpha-carboxylate + 6 Fe(III)-[cytochrome b5] + 4 H2O. It catalyses the reaction 4alpha-methylzymosterol + 6 Fe(II)-[cytochrome b5] + 3 O2 + 5 H(+) = 4alpha-carboxyzymosterol + 6 Fe(III)-[cytochrome b5] + 4 H2O. The catalysed reaction is 4alpha-methyl-5alpha-cholest-7-en-3beta-ol + 6 Fe(II)-[cytochrome b5] + 3 O2 + 5 H(+) = 4alpha-carboxy-5alpha-cholest-7-en-3beta-ol + 6 Fe(III)-[cytochrome b5] + 4 H2O. It carries out the reaction 4,4-dimethyl-5alpha-cholest-8-en-3beta-ol + 6 Fe(II)-[cytochrome b5] + 3 O2 + 5 H(+) = 4alpha-carboxy-4beta-methyl-5alpha-cholest-8-en-3beta-ol + 6 Fe(III)-[cytochrome b5] + 4 H2O. The enzyme catalyses 4alpha-methyl-5alpha-cholest-8-en-3beta-ol + 6 Fe(II)-[cytochrome b5] + 3 O2 + 5 H(+) = 4alpha-carboxy-5alpha-cholest-8-ene-3beta-ol + 6 Fe(III)-[cytochrome b5] + 4 H2O. It participates in steroid biosynthesis; zymosterol biosynthesis; zymosterol from lanosterol: step 3/6. It functions in the pathway steroid biosynthesis; cholesterol biosynthesis. Functionally, catalyzes the three-step monooxygenation required for the demethylation of 4,4-dimethyl and 4alpha-methylsterols, which can be subsequently metabolized to cholesterol. The protein is Methylsterol monooxygenase 1 (MSMO1) of Pongo abelii (Sumatran orangutan).